Reading from the N-terminus, the 416-residue chain is 2-amino-3-ketobutyrate coenzyme A ligase, mitochondrial (416 aa).

A mitochondrion-targeting transit peptide spans 1–18; sequence MWASFMWHGALSPGRRAH. At lysine 42 the chain carries N6-acetyllysine; alternate. An N6-succinyllysine; alternate modification is found at lysine 42. 131-132 contacts pyridoxal 5'-phosphate; sequence CF. Histidine 156 serves as a coordination point for substrate. Lysine 184 is modified (N6-acetyllysine; alternate). N6-succinyllysine; alternate is present on lysine 184. Pyridoxal 5'-phosphate contacts are provided by residues serine 203, 259–262, and 292–293; these read TLGK and SN. N6-(pyridoxal phosphate)lysine is present on lysine 262. N6-succinyllysine occurs at positions 323 and 365. Lysine 380 bears the N6-acetyllysine; alternate mark. Lysine 380 is subject to N6-succinyllysine; alternate. Arginine 386 provides a ligand contact to substrate.

Belongs to the class-II pyridoxal-phosphate-dependent aminotransferase family. Requires pyridoxal 5'-phosphate as cofactor.

It localises to the mitochondrion. It is found in the nucleus. The enzyme catalyses glycine + acetyl-CoA = (2S)-2-amino-3-oxobutanoate + CoA. The protein operates within amino-acid degradation; L-threonine degradation via oxydo-reductase pathway; glycine from L-threonine: step 2/2. In terms of biological role, pyridoxal phosphate (PLP) dependent enzyme, which catalyzes the cleavage of 2-amino-3-oxobutanoate to glycine and acetyl-CoA. Catalyzes the second reaction step on the main metabolic degradation pathway for L-threonine. The chain is 2-amino-3-ketobutyrate coenzyme A ligase, mitochondrial (Gcat) from Mus musculus (Mouse).